The chain runs to 126 residues: uncharacterized protein (126 aa).

A helical transmembrane segment spans residues 5-25 (LIQHITSIFVFSFFFLFFFFS).

The protein resides in the membrane. This is an uncharacterized protein from Saccharomyces cerevisiae (strain ATCC 204508 / S288c) (Baker's yeast).